A 196-amino-acid polypeptide reads, in one-letter code: Small ribosomal subunit protein uS4c (196 aa).

Positions 17–36 (ALPGLTRKTPKSGSNLKKKF) are disordered. An S4 RNA-binding domain is found at 89-157 (MRLDNILFRL…VQNYIASSDP (69 aa)).

It belongs to the universal ribosomal protein uS4 family. Part of the 30S ribosomal subunit. Contacts protein S5. The interaction surface between S4 and S5 is involved in control of translational fidelity.

It localises to the plastid. It is found in the chloroplast. In terms of biological role, one of the primary rRNA binding proteins, it binds directly to 16S rRNA where it nucleates assembly of the body of the 30S subunit. Functionally, with S5 and S12 plays an important role in translational accuracy. This chain is Small ribosomal subunit protein uS4c (rps4), found in Calamagrostis epigeios (Wood small-reed grass).